A 110-amino-acid chain; its full sequence is MRALKMNSISVSVTHGLIFSTLLFVISVAGIIINRRNILILLMSIELMLLAVNTNFLIFANMHQQAMGGVFVFFIMAVAAAETAIGLAIVVAIFRKRKTIDLSKLNTLRG.

3 helical membrane-spanning segments follow: residues 13 to 33, 38 to 58, and 70 to 90; these read VTHGLIFSTLLFVISVAGIII, ILILLMSIELMLLAVNTNFLI, and VFVFFIMAVAAAETAIGLAIV.

Belongs to the complex I subunit 4L family. NDH-1 is composed of 14 different subunits. Subunits NuoA, H, J, K, L, M, N constitute the membrane sector of the complex.

Its subcellular location is the cell inner membrane. The catalysed reaction is a quinone + NADH + 5 H(+)(in) = a quinol + NAD(+) + 4 H(+)(out). In terms of biological role, NDH-1 shuttles electrons from NADH, via FMN and iron-sulfur (Fe-S) centers, to quinones in the respiratory chain. The immediate electron acceptor for the enzyme in this species is believed to be ubiquinone. Couples the redox reaction to proton translocation (for every two electrons transferred, four hydrogen ions are translocated across the cytoplasmic membrane), and thus conserves the redox energy in a proton gradient. This Francisella tularensis subsp. tularensis (strain FSC 198) protein is NADH-quinone oxidoreductase subunit K.